The chain runs to 338 residues: MSKPIVLSGVQPSGELSIGNYLGALRQWQQMQDDYDCQYCVVDLHAITVRQDPQALHEATLDALAICLAVGVDPKKSTLFVQSHVPEHAQLGWVLNCYTQMGELSRMTQFKDKSARYANDVNAGLFGYPVLMAADILLYGAHQVPVGSDQKQHLELARDIATRFNNIYSPEQPIFTIPEPYIPTVNARVMSLQDATKKMSKSDDNRKNVITLLEDPKSIIKKINKAQTDAETPPRIAYDVENKAGIANLMGLYSAATGKTFAEIEAQYAGVEMYGPFKKDVGEAVVAMLEPVQAEYQRIRNDREYLNSVMRDGAEKASAKALQTLKKVYAAVGFVARP.

Residues 11–13 (QPS) and 19–20 (GN) contribute to the ATP site. The 'HIGH' region signature appears at 12-20 (PSGELSIGN). L-tryptophan is bound at residue Asp135. ATP contacts are provided by residues 147 to 149 (GSD), Val189, and 198 to 202 (KMSKS). Positions 198-202 (KMSKS) match the 'KMSKS' region motif.

The protein belongs to the class-I aminoacyl-tRNA synthetase family. Homodimer.

Its subcellular location is the cytoplasm. The catalysed reaction is tRNA(Trp) + L-tryptophan + ATP = L-tryptophyl-tRNA(Trp) + AMP + diphosphate + H(+). Catalyzes the attachment of tryptophan to tRNA(Trp). The sequence is that of Tryptophan--tRNA ligase from Vibrio cholerae serotype O1 (strain ATCC 39315 / El Tor Inaba N16961).